We begin with the raw amino-acid sequence, 408 residues long: Lysosomal phospholipase A and acyltransferase (408 aa).

The signal sequence occupies residues 1–31 (MGLRRGPCPAALLPGGFLFLLLLADPALLAG). A substrate-binding site is contributed by Asp42. Cys61 and Cys85 are oxidised to a cystine. A glycan (N-linked (GlcNAc...) asparagine) is linked at Asn95. The active-site Acyl-ester intermediate is the Ser194. Ser194 is a binding site for Zn(2+). A substrate-binding site is contributed by Met195. Asn269 and Asn285 each carry an N-linked (GlcNAc...) asparagine glycan. Zn(2+) is bound by residues Asp336 and Cys351. Catalysis depends on charge relay system residues Asp356 and His388. Residue His388 participates in Zn(2+) binding. Asn394 carries N-linked (GlcNAc...) asparagine glycosylation.

Belongs to the AB hydrolase superfamily. Lipase family. Post-translationally, N-glycosylated. N-glycosylation is important for maturation of the enzyme and normal subcellular location.

The protein localises to the secreted. It localises to the lysosome. It is found in the membrane. The enzyme catalyses a 1,2-diacyl-sn-glycero-3-phosphocholine + H2O = a 2-acyl-sn-glycero-3-phosphocholine + a fatty acid + H(+). It carries out the reaction 1-hexadecanoyl-2-(9Z-octadecenoyl)-sn-glycero-3-phosphocholine + H2O = 2-(9Z-octadecenoyl)-sn-glycero-3-phosphocholine + hexadecanoate + H(+). The catalysed reaction is 1,2-di-(9Z-octadecenoyl)-sn-glycero-3-phosphocholine + H2O = 2-(9Z-octadecenoyl)-sn-glycero-3-phosphocholine + (9Z)-octadecenoate + H(+). It catalyses the reaction 1-hexadecanoyl-2-glutaroyl-sn-glycero-3-phosphocholine + H2O = 2-glutaroyl-sn-glycero-3-phosphocholine + hexadecanoate + H(+). The enzyme catalyses 1-hexadecanoyl-2-nonadioyl-sn-glycero-3-phosphocholine + H2O = 2-nonadioyl-sn-glycero-3-phosphocholine + hexadecanoate + H(+). It carries out the reaction 1-hexadecanoyl-2-(5-oxopentanoyl)-sn-glycero-3-phosphocholine + H2O = 2-(5-oxopentanoyl)-sn-glycero-3-phosphocholine + hexadecanoate + H(+). The catalysed reaction is 1-hexadecanoyl-2-(9-oxononanoyl)-sn-glycero-3-phosphocholine + H2O = 2-(9-oxononanoyl)-sn-glycero-3-phosphocholine + hexadecanoate + H(+). It catalyses the reaction 1,2-dihexadecanoyl-sn-glycero-3-phosphocholine + H2O = 2-hexadecanoyl-sn-glycero-3-phosphocholine + hexadecanoate + H(+). The enzyme catalyses a 1,2-diacyl-sn-glycero-3-phosphocholine + H2O = a 1-acyl-sn-glycero-3-phosphocholine + a fatty acid + H(+). It carries out the reaction 1-hexadecanoyl-2-(9Z-octadecenoyl)-sn-glycero-3-phosphocholine + H2O = 1-hexadecanoyl-sn-glycero-3-phosphocholine + (9Z)-octadecenoate + H(+). The catalysed reaction is 1,2-di-(9Z-octadecenoyl)-sn-glycero-3-phosphocholine + H2O = 1-(9Z-octadecenoyl)-sn-glycero-3-phosphocholine + (9Z)-octadecenoate + H(+). It catalyses the reaction 1,2-dihexadecanoyl-sn-glycero-3-phosphocholine + H2O = 1-hexadecanoyl-sn-glycero-3-phosphocholine + hexadecanoate + H(+). The enzyme catalyses a 1-acyl-sn-glycero-3-phosphocholine + H2O = sn-glycerol 3-phosphocholine + a fatty acid + H(+). It carries out the reaction 1-hexadecanoyl-sn-glycero-3-phosphocholine + H2O = sn-glycerol 3-phosphocholine + hexadecanoate + H(+). The catalysed reaction is N-(acetyl)-sphing-4-enine + a 1,2-diacyl-sn-glycero-3-phosphoethanolamine = 1-O-acyl-N-(acetyl)-sphing-4-enine + a 2-acyl-sn-glycero-3-phosphoethanolamine. It catalyses the reaction 1-hexadecanoyl-2-(9Z-octadecenoyl)-sn-glycero-3-phosphoethanolamine + N-(acetyl)-sphing-4-enine = 2-(9Z-octadecenoyl)-sn-glycero-3-phosphoethanolamine + 1-hexadecanoyl-N-(acetyl)-sphing-4-enine. The enzyme catalyses 1-hexadecanoyl-2-(9Z,12Z-octadecadienoyl)-sn-glycero-3-phosphoethanolamine + N-(acetyl)-sphing-4-enine = 2-(9Z,12Z)-octadecadienoyl-sn-glycero-3-phosphoethanolamine + 1-hexadecanoyl-N-(acetyl)-sphing-4-enine. It carries out the reaction 1-hexadecanoyl-2-(5Z,8Z,11Z,14Z-eicosatetraenoyl)-sn-glycero-3-phosphoethanolamine + N-(acetyl)-sphing-4-enine = 2-(5Z,8Z,11Z,14Z)-eicosatetraenoyl-sn-glycero-3-phosphoethanolamine + 1-hexadecanoyl-N-(acetyl)-sphing-4-enine. The catalysed reaction is N-(acetyl)-sphing-4-enine + a 1,2-diacyl-sn-glycero-3-phosphoethanolamine = 1-O-acyl-N-(acetyl)-sphing-4-enine + a 1-acyl-sn-glycero-3-phosphoethanolamine. It catalyses the reaction 1-hexadecanoyl-2-(9Z-octadecenoyl)-sn-glycero-3-phosphoethanolamine + N-(acetyl)-sphing-4-enine = 1-(9Z-octadecenoyl)-N-(acetyl)-sphing-4-enine + 1-hexadecanoyl-sn-glycero-3-phosphoethanolamine. The enzyme catalyses 1-hexadecanoyl-2-(9Z,12Z-octadecadienoyl)-sn-glycero-3-phosphoethanolamine + N-(acetyl)-sphing-4-enine = 1-(9Z,12Z-octadecadienoyl)-N-acetylsphing-4-enine + 1-hexadecanoyl-sn-glycero-3-phosphoethanolamine. It carries out the reaction 1-hexadecanoyl-2-(5Z,8Z,11Z,14Z-eicosatetraenoyl)-sn-glycero-3-phosphoethanolamine + N-(acetyl)-sphing-4-enine = 1-(5Z,8Z,11Z,14Z)-eicosatetraenoyl-N-(acetyl)-sphing-4-enine + 1-hexadecanoyl-sn-glycero-3-phosphoethanolamine. The catalysed reaction is N-(acetyl)-sphing-4-enine + a 1,2-diacyl-sn-glycero-3-phosphocholine = 1-O-acyl-N-(acetyl)-sphing-4-enine + a 2-acyl-sn-glycero-3-phosphocholine. It catalyses the reaction 1-hexadecanoyl-2-(9Z-octadecenoyl)-sn-glycero-3-phosphocholine + N-(acetyl)-sphing-4-enine = 1-hexadecanoyl-N-(acetyl)-sphing-4-enine + 2-(9Z-octadecenoyl)-sn-glycero-3-phosphocholine. The enzyme catalyses 1-hexadecanoyl-2-(9Z,12Z-octadecadienoyl)-sn-glycero-3-phosphocholine + N-(acetyl)-sphing-4-enine = 2-(9Z,12Z-octadecadienoyl)-sn-glycero-3-phosphocholine + 1-hexadecanoyl-N-(acetyl)-sphing-4-enine. It carries out the reaction 1-hexadecanoyl-2-(5Z,8Z,11Z,14Z-eicosatetraenoyl)-sn-glycero-3-phosphocholine + N-(acetyl)-sphing-4-enine = 1-hexadecanoyl-N-(acetyl)-sphing-4-enine + 2-(5Z,8Z,11Z,14Z)-eicosatetraenoyl-sn-glycero-3-phosphocholine. The catalysed reaction is 1-hexadecanoyl-2-(4Z,7Z,10Z,13Z,16Z,19Z-docosahexaenoyl)-sn-glycero-3-phosphocholine + N-(acetyl)-sphing-4-enine = 2-(4Z,7Z,10Z,13Z,16Z,19Z-docosahexaenoyl)-sn-glycero-3-phosphocholine + 1-hexadecanoyl-N-(acetyl)-sphing-4-enine. It catalyses the reaction 1-hexadecanoyl-2-nonadioyl-sn-glycero-3-phosphocholine + N-(acetyl)-sphing-4-enine = 2-nonadioyl-sn-glycero-3-phosphocholine + 1-hexadecanoyl-N-(acetyl)-sphing-4-enine. The enzyme catalyses 1-octadecanoyl-2-(9Z-octadecenoyl)-sn-glycero-3-phosphocholine + N-(acetyl)-sphing-4-enine = 1-octadecanoyl-N-(acetyl)-sphing-4-enine + 2-(9Z-octadecenoyl)-sn-glycero-3-phosphocholine. It carries out the reaction 1-(9Z)-octadecenoyl-2-octadecanoyl-sn-glycero-3-phosphocholine + N-(acetyl)-sphing-4-enine = 2-octadecanoyl-sn-glycero-3-phosphocholine + 1-(9Z-octadecenoyl)-N-(acetyl)-sphing-4-enine. The catalysed reaction is 1-octadecanoyl-2-(5Z,8Z,11Z,14Z-eicosatetraenoyl)-sn-glycero-3-phosphocholine + N-(acetyl)-sphing-4-enine = 1-octadecanoyl-N-(acetyl)-sphing-4-enine + 2-(5Z,8Z,11Z,14Z)-eicosatetraenoyl-sn-glycero-3-phosphocholine. It catalyses the reaction 1-(9Z-octadecenoyl)-2-hexadecanoyl-sn-glycero-3-phosphocholine + N-(acetyl)-sphing-4-enine = 1-(9Z-octadecenoyl)-N-(acetyl)-sphing-4-enine + 2-hexadecanoyl-sn-glycero-3-phosphocholine. The enzyme catalyses N-(acetyl)-sphing-4-enine + a 1,2-diacyl-sn-glycero-3-phosphocholine = 1-O-acyl-N-(acetyl)-sphing-4-enine + a 1-acyl-sn-glycero-3-phosphocholine. It carries out the reaction 1-hexadecanoyl-2-(9Z-octadecenoyl)-sn-glycero-3-phosphocholine + N-(acetyl)-sphing-4-enine = 1-(9Z-octadecenoyl)-N-(acetyl)-sphing-4-enine + 1-hexadecanoyl-sn-glycero-3-phosphocholine. The catalysed reaction is 1-hexadecanoyl-2-(9Z,12Z-octadecadienoyl)-sn-glycero-3-phosphocholine + N-(acetyl)-sphing-4-enine = 1-(9Z,12Z-octadecadienoyl)-N-acetylsphing-4-enine + 1-hexadecanoyl-sn-glycero-3-phosphocholine. It catalyses the reaction 1-hexadecanoyl-2-(5Z,8Z,11Z,14Z-eicosatetraenoyl)-sn-glycero-3-phosphocholine + N-(acetyl)-sphing-4-enine = 1-(5Z,8Z,11Z,14Z)-eicosatetraenoyl-N-(acetyl)-sphing-4-enine + 1-hexadecanoyl-sn-glycero-3-phosphocholine. The enzyme catalyses 1-hexadecanoyl-2-(4Z,7Z,10Z,13Z,16Z,19Z-docosahexaenoyl)-sn-glycero-3-phosphocholine + N-(acetyl)-sphing-4-enine = 1-(4Z,7Z,10Z,13Z,16Z,19Z-docosahexaenoyl)-N-(acetyl)-sphing-4-enine + 1-hexadecanoyl-sn-glycero-3-phosphocholine. It carries out the reaction 1-octadecanoyl-2-(9Z-octadecenoyl)-sn-glycero-3-phosphocholine + N-(acetyl)-sphing-4-enine = 1-(9Z-octadecenoyl)-N-(acetyl)-sphing-4-enine + 1-octadecanoyl-sn-glycero-3-phosphocholine. The catalysed reaction is 1-octadecanoyl-2-(9Z,12Z)-octadecadienoyl-sn-glycero-3-phosphocholine + N-(acetyl)-sphing-4-enine = 1-(9Z,12Z-octadecadienoyl)-N-acetylsphing-4-enine + 1-octadecanoyl-sn-glycero-3-phosphocholine. It catalyses the reaction 1-(9Z-octadecenoyl)-2-hexadecanoyl-sn-glycero-3-phosphocholine + N-(acetyl)-sphing-4-enine = 1-hexadecanoyl-N-(acetyl)-sphing-4-enine + 1-(9Z-octadecenoyl)-sn-glycero-3-phosphocholine. The enzyme catalyses 1-(9Z)-octadecenoyl-2-octadecanoyl-sn-glycero-3-phosphocholine + N-(acetyl)-sphing-4-enine = 1-octadecanoyl-N-(acetyl)-sphing-4-enine + 1-(9Z-octadecenoyl)-sn-glycero-3-phosphocholine. It carries out the reaction 1,2-di-(9Z-octadecenoyl)-sn-glycero-3-phosphocholine + N-(acetyl)-sphing-4-enine = 1-(9Z-octadecenoyl)-N-(acetyl)-sphing-4-enine + 1-(9Z-octadecenoyl)-sn-glycero-3-phosphocholine. The catalysed reaction is 1-octadecanoyl-2-(5Z,8Z,11Z,14Z-eicosatetraenoyl)-sn-glycero-3-phosphocholine + N-(acetyl)-sphing-4-enine = 1-(5Z,8Z,11Z,14Z)-eicosatetraenoyl-N-(acetyl)-sphing-4-enine + 1-octadecanoyl-sn-glycero-3-phosphocholine. It catalyses the reaction a 1,2-diacyl-sn-glycero-3-phospho-L-serine + N-(acetyl)-sphing-4-enine = a 2-acyl-sn-glycero-3-phospho-L-serine + 1-O-acyl-N-(acetyl)-sphing-4-enine. The enzyme catalyses 1-octadecanoyl-2-(9Z-octadecenoyl)-sn-glycero-3-phospho-L-serine + N-(acetyl)-sphing-4-enine = 2-(9Z-octadecenoyl)-sn-glycero-3-phospho-L-serine + 1-octadecanoyl-N-(acetyl)-sphing-4-enine. It carries out the reaction a 1,2-diacyl-sn-glycero-3-phospho-L-serine + N-(acetyl)-sphing-4-enine = 1-O-acyl-N-(acetyl)-sphing-4-enine + a 1-acyl-sn-glycero-3-phospho-L-serine. The catalysed reaction is 1-octadecanoyl-2-(9Z-octadecenoyl)-sn-glycero-3-phospho-L-serine + N-(acetyl)-sphing-4-enine = 1-octadecanoyl-sn-glycero-3-phosphoserine + 1-(9Z-octadecenoyl)-N-(acetyl)-sphing-4-enine. It catalyses the reaction a 1,2-diacyl-sn-glycero-3-phospho-(1'-sn-glycerol) + N-(acetyl)-sphing-4-enine = 2-acyl-sn-glycero-3-phospho-(1'-sn-glycerol) + 1-O-acyl-N-(acetyl)-sphing-4-enine. The enzyme catalyses 1-octadecanoyl-2-(9Z-octadecenoyl)-sn-glycero-3-phospho-(1'-sn-glycerol) + N-(acetyl)-sphing-4-enine = 2-(9Z-octadecenoyl)-sn-glycero-3-phospho-(1'-sn-glycerol) + 1-octadecanoyl-N-(acetyl)-sphing-4-enine. It carries out the reaction a 1,2-diacyl-sn-glycero-3-phospho-(1'-sn-glycerol) + N-(acetyl)-sphing-4-enine = 1-O-acyl-N-(acetyl)-sphing-4-enine + 1-acyl-sn-glycero-3-phospho-(1'-sn-glycerol). The catalysed reaction is 1-octadecanoyl-2-(9Z-octadecenoyl)-sn-glycero-3-phospho-(1'-sn-glycerol) + N-(acetyl)-sphing-4-enine = 1-octadecanoyl-sn-glycero-3-phospho-(1'-sn-glycerol) + 1-(9Z-octadecenoyl)-N-(acetyl)-sphing-4-enine. It catalyses the reaction an N-acylethanolamine + a 1,2-diacyl-sn-glycero-3-phosphocholine = 2-(acylamino)ethyl fatty acid + a 2-acyl-sn-glycero-3-phosphocholine. The enzyme catalyses an N-acylethanolamine + a 1,2-diacyl-sn-glycero-3-phosphocholine = 2-(acylamino)ethyl fatty acid + a 1-acyl-sn-glycero-3-phosphocholine. It carries out the reaction N-(5Z,8Z,11Z,14Z-eicosatetraenoyl)-ethanolamine + 1,2-di-(9Z-octadecenoyl)-sn-glycero-3-phosphocholine = 2-[(5Z,8Z,11Z,14Z)-eicosatetraenoylamino]ethyl (9Z)-octadecenoate + (9Z-octadecenoyl)-sn-glycero-3-phosphocholine. The catalysed reaction is N-(9Z-octadecenoyl) ethanolamine + 1,2-di-(9Z-octadecenoyl)-sn-glycero-3-phosphocholine = 2-[(9Z)-octadecenoylamino]ethyl (9Z)-octadecenoate + (9Z-octadecenoyl)-sn-glycero-3-phosphocholine. It catalyses the reaction a 3-acyl-sn-glycerol + a 1,2-diacyl-sn-glycero-3-phosphocholine = a 1,3-diacylglycerol + a 1-acyl-sn-glycero-3-phosphocholine. The enzyme catalyses a 3-acyl-sn-glycerol + a 1,2-diacyl-sn-glycero-3-phosphocholine = a 1,3-diacylglycerol + a 2-acyl-sn-glycero-3-phosphocholine. It carries out the reaction 3-(9Z-octadecenoyl)-sn-glycerol + 1,2-di-(9Z-octadecenoyl)-sn-glycero-3-phosphocholine = 1,3-di-(9Z-octadecenoyl)-glycerol + (9Z-octadecenoyl)-sn-glycero-3-phosphocholine. The catalysed reaction is 3-hexadecanoyl-sn-glycerol + 1,2-di-(9Z-octadecenoyl)-sn-glycero-3-phosphocholine = 1-(9Z)-octadecenoyl-3-hexadecanoyl-sn-glycerol + (9Z-octadecenoyl)-sn-glycero-3-phosphocholine. It catalyses the reaction a 1-acyl-sn-glycerol + a 1,2-diacyl-sn-glycero-3-phosphocholine = a 1,3-diacylglycerol + a 2-acyl-sn-glycero-3-phosphocholine. The enzyme catalyses a 1-acyl-sn-glycerol + a 1,2-diacyl-sn-glycero-3-phosphocholine = a 1,3-diacylglycerol + a 1-acyl-sn-glycero-3-phosphocholine. It carries out the reaction 1-(9Z-octadecenoyl)-sn-glycerol + 1,2-di-(9Z-octadecenoyl)-sn-glycero-3-phosphocholine = 1,3-di-(9Z-octadecenoyl)-glycerol + (9Z-octadecenoyl)-sn-glycero-3-phosphocholine. The catalysed reaction is 1-hexadecanoyl-sn-glycerol + 1,2-di-(9Z-octadecenoyl)-sn-glycero-3-phosphocholine = 1-hexadecanoyl-3-(9Z)-octadecenoyl-sn-glycerol + (9Z-octadecenoyl)-sn-glycero-3-phosphocholine. It catalyses the reaction a 2-acylglycerol + a 1,2-diacyl-sn-glycero-3-phosphocholine = a 1,2-diacylglycerol + a 2-acyl-sn-glycero-3-phosphocholine. The enzyme catalyses a 2-acylglycerol + a 1,2-diacyl-sn-glycero-3-phosphocholine = a 1,2-diacylglycerol + a 1-acyl-sn-glycero-3-phosphocholine. It carries out the reaction 2-hexadecanoylglycerol + 1,2-di-(9Z-octadecenoyl)-sn-glycero-3-phosphocholine = 1-(9Z)-octadecenoyl-2-hexadecanoylglycerol + (9Z-octadecenoyl)-sn-glycero-3-phosphocholine. The catalysed reaction is 1-O-alkylglycerol + a 1,2-diacyl-sn-glycero-3-phosphocholine = 1-O-alkyl-3-acylglycerol + a 1-acyl-sn-glycero-3-phosphocholine. It catalyses the reaction 1-O-alkylglycerol + a 1,2-diacyl-sn-glycero-3-phosphocholine = 1-O-alkyl-3-acylglycerol + a 2-acyl-sn-glycero-3-phosphocholine. The enzyme catalyses 1-O-hexadecylglycerol + 1,2-di-(9Z-octadecenoyl)-sn-glycero-3-phosphocholine = 1-O-hexadecyl-3-(9Z)-octadecenoylglycerol + (9Z-octadecenoyl)-sn-glycero-3-phosphocholine. It carries out the reaction 1-O-alkyl-2-acyl-sn-glycerol + a 1,2-diacyl-sn-glycero-3-phosphocholine = 1-O-alkyl-2,3-diacyl-sn-glycerol + a 2-acyl-sn-glycero-3-phosphocholine. The catalysed reaction is 1-O-alkyl-2-acyl-sn-glycerol + a 1,2-diacyl-sn-glycero-3-phosphocholine = 1-O-alkyl-2,3-diacyl-sn-glycerol + a 1-acyl-sn-glycero-3-phosphocholine. It catalyses the reaction 1-O-hexadecyl-2-acetyl-sn-glycerol + 1,2-di-(9Z-octadecenoyl)-sn-glycero-3-phosphocholine = 1-O-hexadecyl-2-acetyl-3-(9Z)-octadecenoyl-sn-glycerol + (9Z-octadecenoyl)-sn-glycero-3-phosphocholine. The enzyme catalyses 1-O-hexadecyl-2-O-methyl-sn-glycerol + 1,2-di-(9Z-octadecenoyl)-sn-glycero-3-phosphocholine = 1-O-hexadecyl-2-O-methyl-3-(9Z)-octadecenoyl-sn-glycerol + (9Z-octadecenoyl)-sn-glycero-3-phosphocholine. It carries out the reaction a 1,2-diacyl-sn-glycero-3-phosphoethanolamine + H2O = a 1-acyl-sn-glycero-3-phosphoethanolamine + a fatty acid + H(+). The catalysed reaction is 1-acyl-2-(5Z,8Z,11Z,14Z)-eicosatetraenoyl-sn-glycero-3-phosphoethanolamine + H2O = a 1-acyl-sn-glycero-3-phosphoethanolamine + (5Z,8Z,11Z,14Z)-eicosatetraenoate + H(+). It catalyses the reaction a 1,2-diacyl-sn-glycero-3-phospho-(1'-sn-glycerol) + H2O = 1-acyl-sn-glycero-3-phospho-(1'-sn-glycerol) + a fatty acid + H(+). The enzyme catalyses 1-hexadecanoyl-2-(9Z-octadecenoyl)-sn-glycero-3-phospho-(1'-sn-glycerol) + H2O = 1-hexadecanoyl-sn-glycero-3-phospho-(1'-sn-glycerol) + (9Z)-octadecenoate + H(+). It carries out the reaction a 1,2-diacyl-sn-glycero-3-phospho-(1'-sn-glycerol) + H2O = 2-acyl-sn-glycero-3-phospho-(1'-sn-glycerol) + a fatty acid + H(+). The catalysed reaction is 1-hexadecanoyl-2-(9Z-octadecenoyl)-sn-glycero-3-phospho-(1'-sn-glycerol) + H2O = 2-(9Z-octadecenoyl)-sn-glycero-3-phospho-(1'-sn-glycerol) + hexadecanoate + H(+). In terms of biological role, has dual calcium-independent phospholipase and O-acyltransferase activities with a potential role in glycerophospholipid homeostasis and remodeling of acyl groups of lipophilic alcohols present in acidic cellular compartments. Catalyzes hydrolysis of the ester bond of the fatty acyl group attached at sn-1 or sn-2 position of phospholipids (phospholipase A1 or A2 activity) and transfer it to the hydroxyl group at the first carbon of lipophilic alcohols (O-acyltransferase activity). Among preferred fatty acyl donors are phosphatidylcholines, phosphatidylethanolamines, phosphatidylglycerols and phosphatidylserines. Favors sn-2 over sn-1 deacylation of unsaturated fatty acyl groups of phosphatidylcholines, phosphatidylethanolamines, and phosphatidylglycerols. Among preferred fatty acyl acceptors are natural lipophilic alcohols including short-chain ceramide N-acetyl-sphingosine (C2 ceramide), alkylacylglycerols, monoacylglycerols, and acylethanolamides such as anandamide and oleoylethanolamide. Selectively hydrolyzes the sn-1 fatty acyl group of truncated oxidized phospholipids and may play a role in detoxification of reactive oxidized phospholipids during oxidative stress. Required for normal phospholipid degradation in alveolar macrophages with potential implications in the clearance of pulmonary surfactant, which is mainly composed of dipalmitoylphosphatidylcholine (1,2-dihexadecanoyl-sn-glycero-3-phosphocholine). Involved in the first step of bis(monoacylglycero)phosphate (BMP) de novo synthesis from phosphatidylglycerol (1,2-diacyl-sn-glycero-3-phospho-(1'-sn-glycerol), PG). BMP is an important player in cargo sorting and degradation, regulation of cellular cholesterol levels and intercellular communication. At neutral pH, hydrolyzes the sn-1 fatty acyl group of the lysophosphatidylcholines. This chain is Lysosomal phospholipase A and acyltransferase (PLA2G15), found in Canis lupus familiaris (Dog).